The chain runs to 282 residues: tRNA U34 carboxymethyltransferase (282 aa).

Carboxy-S-adenosyl-L-methionine is bound by residues lysine 54, tryptophan 68, lysine 73, glycine 92, 114–116, tyrosine 161, and arginine 276; that span reads DPS.

It belongs to the class I-like SAM-binding methyltransferase superfamily. CmoB family. As to quaternary structure, homotetramer.

The enzyme catalyses carboxy-S-adenosyl-L-methionine + 5-hydroxyuridine(34) in tRNA = 5-carboxymethoxyuridine(34) in tRNA + S-adenosyl-L-homocysteine + H(+). In terms of biological role, catalyzes carboxymethyl transfer from carboxy-S-adenosyl-L-methionine (Cx-SAM) to 5-hydroxyuridine (ho5U) to form 5-carboxymethoxyuridine (cmo5U) at position 34 in tRNAs. The chain is tRNA U34 carboxymethyltransferase from Campylobacter fetus subsp. fetus (strain 82-40).